Consider the following 347-residue polypeptide: Rhodopsin (347 aa).

The Extracellular segment spans residues 1-33; that stretch reads TEGPDFYIPMVNTTGVVRSPYEYPQYYLVNPAA. The N-linked (GlcNAc...) asparagine glycan is linked to asparagine 12. A helical transmembrane segment spans residues 34–58; sequence FAVLGAYMFFLIIIGFPINFLTLYV. Residues 59-70 are Cytoplasmic-facing; the sequence is TLEHKKLRTPLN. Residues 71–93 traverse the membrane as a helical segment; the sequence is YILLNLAVADLFMVIGGFTTTMY. Residues 94 to 107 are Extracellular-facing; it reads SSMHGYFVLGRLGC. Cysteine 107 and cysteine 184 are oxidised to a cystine. Residues 108 to 130 traverse the membrane as a helical segment; sequence NIEGFFATLGGMISLWSLAVLAI. The 'Ionic lock' involved in activated form stabilization motif lies at 131–133; sequence ERW. Residues 131 to 149 are Cytoplasmic-facing; it reads ERWVVVCKPISNFRFGENH. Residues 150 to 170 form a helical membrane-spanning segment; that stretch reads AIMGVSLTWVMALACTVPPLV. The Extracellular portion of the chain corresponds to 171–199; sequence GWSRYIPEGMQCACGIDYYTRAEGYNNES. Residue asparagine 197 is glycosylated (N-linked (GlcNAc...) asparagine). The helical transmembrane segment at 200-221 threads the bilayer; sequence FVIYMFTFHFLFPMFIIFFCYG. The Cytoplasmic segment spans residues 222–249; sequence RLLCAVKEAAAAQQESETTQRAEREVTR. Residues 250-271 form a helical membrane-spanning segment; the sequence is MVILMVIGYLVCWLPYASVAWF. The Extracellular segment spans residues 272–283; that stretch reads IFTHKGSEFGPL. A helical transmembrane segment spans residues 284–305; it reads FMAVPSFFAKSSSIYNPIIYIC. Lysine 293 carries the post-translational modification N6-(retinylidene)lysine. Topologically, residues 306-347 are cytoplasmic; sequence MNKQFRQCMITTLFCGKNPFEGQEEDSSTKTEASSASSVSPA. Cysteine 320 is lipidated: S-palmitoyl cysteine. The disordered stretch occupies residues 326–347; the sequence is EGQEEDSSTKTEASSASSVSPA. A compositionally biased stretch (low complexity) spans 335–347; that stretch reads KTEASSASSVSPA.

Belongs to the G-protein coupled receptor 1 family. Opsin subfamily. In terms of processing, phosphorylated on some or all of the serine and threonine residues present in the C-terminal region. Contains one covalently linked retinal chromophore.

Its subcellular location is the membrane. The protein resides in the cell projection. The protein localises to the cilium. It localises to the photoreceptor outer segment. Functionally, photoreceptor required for image-forming vision at low light intensity. While most salt water fish species use retinal as chromophore, most freshwater fish use 3-dehydroretinal, or a mixture of retinal and 3-dehydroretinal. Light-induced isomerization of 11-cis to all-trans retinal triggers a conformational change that activates signaling via G-proteins. Subsequent receptor phosphorylation mediates displacement of the bound G-protein alpha subunit by arrestin and terminates signaling. This Sargocentron tiere (Blue lined squirrelfish) protein is Rhodopsin (rho).